The sequence spans 83 residues: Small ribosomal subunit protein uS17 (83 aa).

It belongs to the universal ribosomal protein uS17 family. In terms of assembly, part of the 30S ribosomal subunit.

Functionally, one of the primary rRNA binding proteins, it binds specifically to the 5'-end of 16S ribosomal RNA. This chain is Small ribosomal subunit protein uS17, found in Francisella tularensis subsp. tularensis (strain FSC 198).